Reading from the N-terminus, the 592-residue chain is A-type ATP synthase subunit A (592 aa).

236–243 lines the ATP pocket; the sequence is GPFGSGKT.

This sequence belongs to the ATPase alpha/beta chains family. In terms of assembly, has multiple subunits with at least A(3), B(3), C, D, E, F, H, I and proteolipid K(x).

The protein localises to the cell membrane. The enzyme catalyses ATP + H2O + 4 H(+)(in) = ADP + phosphate + 5 H(+)(out). In terms of biological role, component of the A-type ATP synthase that produces ATP from ADP in the presence of a proton gradient across the membrane. The A chain is the catalytic subunit. This Methanopyrus kandleri (strain AV19 / DSM 6324 / JCM 9639 / NBRC 100938) protein is A-type ATP synthase subunit A.